Reading from the N-terminus, the 164-residue chain is MEMLQGLLLCLLLSTGGAWASNEPLRPLCRPTHAILAAEKEGCPVCVAFNTTICAGYCSSMVRVLQTVMPPLPQLVCNYHELRFTSVRLPGCRRGVNPVVYFPVAVSCRCALCRRSYSDCGNLKSEPLGCDYHTSQDSSSKDPPRNLTSPSQLPEPADAPLVPQ.

The signal sequence occupies residues 1 to 20 (MEMLQGLLLCLLLSTGGAWA). 6 disulfides stabilise this stretch: Cys29–Cys77, Cys43–Cys92, Cys46–Cys130, Cys54–Cys108, Cys58–Cys110, and Cys113–Cys120. Asn50 carries an N-linked (GlcNAc...) asparagine glycan. The segment at 133-164 (HTSQDSSSKDPPRNLTSPSQLPEPADAPLVPQ) is disordered. Residue Ser140 is glycosylated (O-linked (GalNAc...) serine). Residue Asn146 is glycosylated (N-linked (GlcNAc...) asparagine). The O-linked (GalNAc...) serine glycan is linked to Ser151.

Belongs to the glycoprotein hormones subunit beta family. In terms of assembly, heterodimer of a common alpha chain and a unique beta chain which confers biological specificity to thyrotropin, lutropin, follitropin and gonadotropin.

The protein localises to the secreted. In terms of biological role, stimulates the ovaries to synthesize the steroids that are essential for the maintenance of pregnancy. The protein is Choriogonadotropin subunit beta (CGB) of Aotus nancymaae (Ma's night monkey).